Consider the following 525-residue polypeptide: Phospho-2-dehydro-3-deoxyheptonate aldolase 1, chloroplastic (525 aa).

A compositionally biased stretch (polar residues) spans 1-13 (MALSNASSLSTRS). Residues 1 to 35 (MALSNASSLSTRSIYGGDLSHRPSNRQSSFTFHPA) form a disordered region. The N-terminal 52 residues, 1-52 (MALSNASSLSTRSIYGGDLSHRPSNRQSSFTFHPAVNTKPKSVNLVTAVHAA), are a transit peptide targeting the chloroplast.

This sequence belongs to the class-II DAHP synthase family.

The protein resides in the plastid. It is found in the chloroplast. It carries out the reaction D-erythrose 4-phosphate + phosphoenolpyruvate + H2O = 7-phospho-2-dehydro-3-deoxy-D-arabino-heptonate + phosphate. It participates in metabolic intermediate biosynthesis; chorismate biosynthesis; chorismate from D-erythrose 4-phosphate and phosphoenolpyruvate: step 1/7. In Arabidopsis thaliana (Mouse-ear cress), this protein is Phospho-2-dehydro-3-deoxyheptonate aldolase 1, chloroplastic (DHS1).